The sequence spans 282 residues: 4-diphosphocytidyl-2-C-methyl-D-erythritol kinase (282 aa).

Residue Lys12 is part of the active site. 95–105 (PMGGGIGGGSS) serves as a coordination point for ATP. Asp137 is a catalytic residue.

It belongs to the GHMP kinase family. IspE subfamily.

The enzyme catalyses 4-CDP-2-C-methyl-D-erythritol + ATP = 4-CDP-2-C-methyl-D-erythritol 2-phosphate + ADP + H(+). The protein operates within isoprenoid biosynthesis; isopentenyl diphosphate biosynthesis via DXP pathway; isopentenyl diphosphate from 1-deoxy-D-xylulose 5-phosphate: step 3/6. In terms of biological role, catalyzes the phosphorylation of the position 2 hydroxy group of 4-diphosphocytidyl-2C-methyl-D-erythritol. This chain is 4-diphosphocytidyl-2-C-methyl-D-erythritol kinase, found in Pseudomonas paraeruginosa (strain DSM 24068 / PA7) (Pseudomonas aeruginosa (strain PA7)).